Consider the following 351-residue polypeptide: DNA polymerase IV (351 aa).

The UmuC domain occupies 4 to 185 (IIHVDMDCFF…LPLAKIPGVG (182 aa)). Positions 8 and 103 each coordinate Mg(2+). Glutamate 104 is an active-site residue.

This sequence belongs to the DNA polymerase type-Y family. As to quaternary structure, monomer. Mg(2+) is required as a cofactor.

The protein localises to the cytoplasm. It carries out the reaction DNA(n) + a 2'-deoxyribonucleoside 5'-triphosphate = DNA(n+1) + diphosphate. Functionally, poorly processive, error-prone DNA polymerase involved in untargeted mutagenesis. Copies undamaged DNA at stalled replication forks, which arise in vivo from mismatched or misaligned primer ends. These misaligned primers can be extended by PolIV. Exhibits no 3'-5' exonuclease (proofreading) activity. May be involved in translesional synthesis, in conjunction with the beta clamp from PolIII. This chain is DNA polymerase IV, found in Salmonella arizonae (strain ATCC BAA-731 / CDC346-86 / RSK2980).